Here is a 165-residue protein sequence, read N- to C-terminus: MRCPFCGAQDTRVVDSRLSHEGDQVRRRRECGECKERFTTYEAAELNMPRVVKSDGSRQPFREEKLRAGMLRALEKRPVSSDRVEAAITRIEKRLLATGEREVQSRLVGEYVMNELSQLDDVAYVRFASVYRRFEDVNQFREVIDRLESEPDSETAGRQADAFDA.

A zinc finger lies at Cys3–Cys34. Residues Pro49–Gln139 form the ATP-cone domain.

The protein belongs to the NrdR family. Requires Zn(2+) as cofactor.

Negatively regulates transcription of bacterial ribonucleotide reductase nrd genes and operons by binding to NrdR-boxes. The chain is Transcriptional repressor NrdR from Methylococcus capsulatus (strain ATCC 33009 / NCIMB 11132 / Bath).